Reading from the N-terminus, the 351-residue chain is Nicotinate-nucleotide--dimethylbenzimidazole phosphoribosyltransferase (351 aa).

Residue glutamate 315 is the Proton acceptor of the active site.

It belongs to the CobT family.

It catalyses the reaction 5,6-dimethylbenzimidazole + nicotinate beta-D-ribonucleotide = alpha-ribazole 5'-phosphate + nicotinate + H(+). Its pathway is nucleoside biosynthesis; alpha-ribazole biosynthesis; alpha-ribazole from 5,6-dimethylbenzimidazole: step 1/2. Catalyzes the synthesis of alpha-ribazole-5'-phosphate from nicotinate mononucleotide (NAMN) and 5,6-dimethylbenzimidazole (DMB). This is Nicotinate-nucleotide--dimethylbenzimidazole phosphoribosyltransferase from Acetivibrio thermocellus (strain ATCC 27405 / DSM 1237 / JCM 9322 / NBRC 103400 / NCIMB 10682 / NRRL B-4536 / VPI 7372) (Clostridium thermocellum).